Reading from the N-terminus, the 555-residue chain is Glutamine--tRNA ligase (555 aa).

The 'HIGH' region signature appears at 34–44 (PEPNGYLHIGH). ATP-binding positions include 35–37 (EPN) and 41–47 (HIGHAKS). The L-glutamine site is built by Asp67 and Tyr212. ATP contacts are provided by residues Thr231, 261 to 262 (RL), and 269 to 271 (MSK). The short motif at 268–272 (VMSKR) is the 'KMSKS' region element. The interval 317-324 (TKQDNTIE) is interaction with tRNA.

Belongs to the class-I aminoacyl-tRNA synthetase family. In terms of assembly, monomer.

Its subcellular location is the cytoplasm. The enzyme catalyses tRNA(Gln) + L-glutamine + ATP = L-glutaminyl-tRNA(Gln) + AMP + diphosphate. This chain is Glutamine--tRNA ligase, found in Salmonella newport (strain SL254).